The following is a 130-amino-acid chain: Small ribosomal subunit protein uS8 (130 aa).

The protein belongs to the universal ribosomal protein uS8 family. In terms of assembly, part of the 30S ribosomal subunit. Contacts proteins S5 and S12.

Its function is as follows. One of the primary rRNA binding proteins, it binds directly to 16S rRNA central domain where it helps coordinate assembly of the platform of the 30S subunit. This Pseudomonas syringae pv. tomato (strain ATCC BAA-871 / DC3000) protein is Small ribosomal subunit protein uS8.